The sequence spans 507 residues: Histidine ammonia-lyase (507 aa).

A cross-link (5-imidazolinone (Ala-Gly)) is located at residues 145–147 (ASG). Position 146 is a 2,3-didehydroalanine (Ser) (serine 146).

Belongs to the PAL/histidase family. Contains an active site 4-methylidene-imidazol-5-one (MIO), which is formed autocatalytically by cyclization and dehydration of residues Ala-Ser-Gly.

It is found in the cytoplasm. The enzyme catalyses L-histidine = trans-urocanate + NH4(+). It functions in the pathway amino-acid degradation; L-histidine degradation into L-glutamate; N-formimidoyl-L-glutamate from L-histidine: step 1/3. In Treponema denticola (strain ATCC 35405 / DSM 14222 / CIP 103919 / JCM 8153 / KCTC 15104), this protein is Histidine ammonia-lyase.